Reading from the N-terminus, the 223-residue chain is Serine/threonine/tyrosine-interacting protein B (223 aa).

The Tyrosine-protein phosphatase domain maps to 28 to 176 (EMQEILPGLF…LQEYEAIYLA (149 aa)).

Belongs to the protein-tyrosine phosphatase family. Non-receptor class subfamily.

Functionally, catalytically inactive phosphatase. The protein is Serine/threonine/tyrosine-interacting protein B (styx-b) of Xenopus laevis (African clawed frog).